A 657-amino-acid chain; its full sequence is Broad substrate specificity ATP-binding cassette transporter ABCG2 (657 aa).

The segment at 1–24 (MSSSNDHVLVPMSQRNNNGLPRTN) is disordered. The Cytoplasmic portion of the chain corresponds to 1-393 (MSSSNDHVLV…SFKNLLGNPQ (393 aa)). Polar residues predominate over residues 13 to 24 (SQRNNNGLPRTN). The region spanning 48-285 (VKSGFLVRKT…FASAGYHCEP (238 aa)) is the ABC transporter domain. ATP contacts are provided by residues 79 to 86 (GPTGGGKS), 183 to 189 (RGISGGE), E210, and H242. One can recognise an ABC transmembrane type-2 domain in the interval 389–653 (LGNPQASVAQ…TIAYLKLLFL (265 aa)). The helical transmembrane segment at 394–414 (ASVAQLIVTVILGLIIGAIYF) threads the bilayer. Residues 415-428 (DLKYDAAGMQNRAG) lie on the Extracellular side of the membrane. Residues 429–449 (VLFFLTTNQCFSSVSAVELFV) traverse the membrane as a helical segment. Over 450–477 (VEKKLFIHEYISGYYRVSSYFFGKVMSD) the chain is Cytoplasmic. Residues 478 to 498 (LLPMRFLPSVIFTCVLYFMLG) traverse the membrane as a helical segment. Over 499-506 (LKKTVDAF) the chain is Extracellular. Residues 507–527 (FIMMFTLIMVAYTASSMALAI) form a helical membrane-spanning segment. Over 528 to 535 (ATGQSVVS) the chain is Cytoplasmic. A helical transmembrane segment spans residues 536–556 (VATLLMTIAFVFMMLFSGLLV). Topologically, residues 557–632 (NLRTIGPWLS…LSPWGLWKNH (76 aa)) are extracellular. A disulfide bond links C592 and C610. 2 N-linked (GlcNAc...) asparagine glycosylation sites follow: N596 and N600. A helical membrane pass occupies residues 633–653 (VALACMIIIFLTIAYLKLLFL). Topologically, residues 654–657 (KKYS) are cytoplasmic.

This sequence belongs to the ABC transporter superfamily. ABCG family. Eye pigment precursor importer (TC 3.A.1.204) subfamily. In terms of assembly, homodimer; disulfide-linked. The minimal functional unit is a homodimer, but the major oligomeric form in plasma membrane is a homotetramer with possibility of higher order oligomerization up to homododecamers. N-glycosylated. Glycosylation-deficient ABCG2 is normally expressed and functional. Post-translationally, phosphorylated. Phosphorylation may regulate the localization to the plasma membrane, the homooligomerization and therefore, the activity of the transporter. In terms of tissue distribution, highly expressed in kidney. Lower expression in liver, colon, heart, spleen, and placenta. Expressed in mammary gland. Expressed in intestinal villi and renal proximal tubules, hepatic bile canalicular membranes, and placental labyrinth cells (at protein level).

Its subcellular location is the cell membrane. It localises to the apical cell membrane. It is found in the mitochondrion membrane. It carries out the reaction ATP + H2O + xenobioticSide 1 = ADP + phosphate + xenobioticSide 2.. The enzyme catalyses riboflavin(in) + ATP + H2O = riboflavin(out) + ADP + phosphate + H(+). The catalysed reaction is pheophorbide a(in) + ATP + H2O = pheophorbide a(out) + ADP + phosphate + H(+). It catalyses the reaction urate(in) + ATP + H2O = urate(out) + ADP + phosphate + H(+). It carries out the reaction indoxyl sulfate(in) + ATP + H2O = indoxyl sulfate(out) + ADP + phosphate + H(+). The enzyme catalyses sphing-4-enine 1-phosphate(in) + ATP + H2O = sphing-4-enine 1-phosphate(out) + ADP + phosphate + H(+). The catalysed reaction is estrone 3-sulfate(in) + ATP + H2O = estrone 3-sulfate(out) + ADP + phosphate + H(+). It catalyses the reaction dehydroepiandrosterone 3-sulfate(in) + ATP + H2O = dehydroepiandrosterone 3-sulfate(out) + ADP + phosphate + H(+). It carries out the reaction 4-methylumbelliferone sulfate(in) + ATP + H2O = 4-methylumbelliferone sulfate(out) + ADP + phosphate + H(+). The enzyme catalyses 5,7-dimethyl-2-methylamino-4-(3-pyridylmethyl)-1,3-benzothiazol-6-yl beta-D-glucuronate(in) + ATP + H2O = 5,7-dimethyl-2-methylamino-4-(3-pyridylmethyl)-1,3-benzothiazol-6-yl beta-D-glucuronate(out) + ADP + phosphate + H(+). The catalysed reaction is 4-methylumbelliferone beta-D-glucuronate(in) + ATP + H2O = 4-methylumbelliferone beta-D-glucuronate(out) + ADP + phosphate + H(+). It catalyses the reaction 5,7-dimethyl-2-methylamino-4-(3-pyridylmethyl)-1,3-benzothiazol-6-yl sulfate(in) + ATP + H2O = 5,7-dimethyl-2-methylamino-4-(3-pyridylmethyl)-1,3-benzothiazol-6-yl sulfate(out) + ADP + phosphate + H(+). It carries out the reaction 17beta-estradiol 17-O-(beta-D-glucuronate)(in) + ATP + H2O = 17beta-estradiol 17-O-(beta-D-glucuronate)(out) + ADP + phosphate + H(+). The enzyme catalyses methotrexate(in) + ATP + H2O = methotrexate(out) + ADP + phosphate + H(+). The catalysed reaction is itaconate(in) + ATP + H2O = itaconate(out) + ADP + phosphate + H(+). With respect to regulation, specifically inhibited by the fungal toxin fumitremorgin C and Ko143. In terms of biological role, broad substrate specificity ATP-dependent transporter of the ATP-binding cassette (ABC) family that actively extrudes a wide variety of physiological compounds, dietary toxins and xenobiotics from cells. Involved in porphyrin homeostasis, mediating the export of protoporphyrin IX (PPIX) from both mitochondria to cytosol and cytosol to extracellular space, it also functions in the cellular export of heme. Also mediates the efflux of sphingosine-1-P from cells. Acts as a urate exporter functioning in both renal and extrarenal urate excretion. In kidney, it also functions as a physiological exporter of the uremic toxin indoxyl sulfate. Also involved in the excretion of steroids like estrone 3-sulfate/E1S, 3beta-sulfooxy-androst-5-en-17-one/DHEAS, and other sulfate conjugates. Mediates the secretion of the riboflavin and biotin vitamins into milk. Extrudes pheophorbide a, a phototoxic porphyrin catabolite of chlorophyll, reducing its bioavailability. Plays an important role in the exclusion of xenobiotics from the brain. It confers to cells a resistance to multiple drugs and other xenobiotics including mitoxantrone, pheophorbide, camptothecin, methotrexate, azidothymidine, and the anthracyclines daunorubicin and doxorubicin, through the control of their efflux. In placenta, it limits the penetration of drugs from the maternal plasma into the fetus. May play a role in early stem cell self-renewal by blocking differentiation. In inflammatory macrophages, exports itaconate from the cytosol to the extracellular compartment and limits the activation of TFEB-dependent lysosome biogenesis involved in antibacterial innate immune response. This chain is Broad substrate specificity ATP-binding cassette transporter ABCG2 (Abcg2), found in Mus musculus (Mouse).